The sequence spans 231 residues: Putative cobalt transport protein CbiM 2 (231 aa).

Helical transmembrane passes span 8–28 (LPIG…IYGI), 41–61 (VLPL…LKIP), 75–95 (LSAA…VLLF), 108–128 (LGAN…LVFV), 136–156 (VGIG…TYTV), and 176–196 (IAFA…EGII).

Belongs to the CbiM family. In terms of assembly, forms an energy-coupling factor (ECF) transporter complex composed of an ATP-binding protein (A component, CbiO), a transmembrane protein (T component, CbiQ) and 2 possible substrate-capture proteins (S components, CbiM and CbiN) of unknown stoichimetry.

It is found in the cell membrane. The protein operates within cofactor biosynthesis; adenosylcobalamin biosynthesis. Its function is as follows. Part of the energy-coupling factor (ECF) transporter complex CbiMNOQ involved in cobalt import. The sequence is that of Putative cobalt transport protein CbiM 2 from Methanocorpusculum labreanum (strain ATCC 43576 / DSM 4855 / Z).